The following is a 659-amino-acid chain: uncharacterized protein (659 aa).

16 helical membrane-spanning segments follow: residues 24–44, 71–91, 115–135, 157–177, 183–203, 214–234, 242–262, 279–299, 311–331, 365–385, 393–413, 433–453, 490–510, 517–537, 550–570, and 596–616; these read TTLM…YGLF, FGAS…VMMV, IGWL…DSGV, RAWI…RVII, FVLL…GNAG, AVIV…TAAL, AVLI…AELV, LGLV…WALV, LTAL…VQTA, FDSL…AGFV, TWPV…VFTS, MTLN…TLAL, FILF…DTLV, EFMA…IIGI, IGLL…LMTM, and IGGA…IVAL.

The protein to M.tuberculosis Rv0102.

The protein resides in the cell membrane. This is an uncharacterized protein from Mycobacterium leprae (strain TN).